Consider the following 391-residue polypeptide: Methylthioribose-1-phosphate isomerase (391 aa).

Catalysis depends on Asp267, which acts as the Proton donor.

The protein belongs to the eIF-2B alpha/beta/delta subunits family. MtnA subfamily.

Its subcellular location is the cytoplasm. The protein resides in the nucleus. The enzyme catalyses 5-(methylsulfanyl)-alpha-D-ribose 1-phosphate = 5-(methylsulfanyl)-D-ribulose 1-phosphate. It participates in amino-acid biosynthesis; L-methionine biosynthesis via salvage pathway; L-methionine from S-methyl-5-thio-alpha-D-ribose 1-phosphate: step 1/6. Functionally, catalyzes the interconversion of methylthioribose-1-phosphate (MTR-1-P) into methylthioribulose-1-phosphate (MTRu-1-P). The polypeptide is Methylthioribose-1-phosphate isomerase (Ajellomyces capsulatus (strain NAm1 / WU24) (Darling's disease fungus)).